The sequence spans 106 residues: Met repressor (106 aa).

Belongs to the MetJ family. As to quaternary structure, homodimer.

It localises to the cytoplasm. Functionally, this regulatory protein, when combined with SAM (S-adenosylmethionine) represses the expression of the methionine regulon and of enzymes involved in SAM synthesis. This is Met repressor from Vibrio campbellii (strain ATCC BAA-1116).